Reading from the N-terminus, the 1683-residue chain is Phospholipase D1 (1683 aa).

Disordered regions lie at residues 1-150 (MSNV…AYTQ), 173-198 (LKSSVNSPTPAGSGHRHNQHQHQQVN), 259-289 (ILDITNSNHNHRGNNNNNTGENSDRRPSIPR), and 384-416 (VMEKKAENKPSSAASAPHTSENNNNDNGSNITS). An N-acetylserine modification is found at serine 2. A phosphoserine mark is found at serine 8 and serine 30. Composition is skewed to basic and acidic residues over residues 20–34 (SVTEEVDRVNSRPDE), 63–82 (NGKEAERKHALPKSFVDRNL), and 90–112 (SLDHIMHSNEHDPRRGSDEENMH). Positions 116–125 (NNLHSSNNNV) are enriched in low complexity. Polar residues predominate over residues 141–150 (RRSSSVAYTQ). At serine 145 the chain carries Phosphoserine. A compositionally biased stretch (low complexity) spans 263-279 (TNSNHNHRGNNNNNTGE). The PX domain maps to 291–487 (SSIISISSNV…EFYELSPLGN (197 aa)). A compositionally biased stretch (polar residues) spans 392 to 404 (KPSSAASAPHTSE). The span at 405 to 416 (NNNNDNGSNITS) shows a compositional bias: low complexity. Positions 496–664 (QGKQGYLVIR…SSIIKMSTST (169 aa)) constitute a PH domain. 2 PLD phosphodiesterase domains span residues 791 to 818 (YFWAHHEKFVVIDETFAFIGGTDLCYGR) and 1091 to 1118 (EQLYVHAKILIADDRRCIIGSANINERS). Catalysis depends on residues histidine 796, lysine 798, aspartate 803, histidine 1096, lysine 1098, and aspartate 1103. The segment at 1430–1465 (KDMRRHLSSSTESTRNGSNSLPLNEKSNEGESTNVD) is disordered. A compositionally biased stretch (polar residues) spans 1437–1451 (SSSTESTRNGSNSLP). Phosphoserine is present on serine 1461. Position 1462 is a phosphothreonine (threonine 1462).

It belongs to the phospholipase D family. As to quaternary structure, interacts with SRF1.

The enzyme catalyses a 1,2-diacyl-sn-glycero-3-phosphocholine + H2O = a 1,2-diacyl-sn-glycero-3-phosphate + choline + H(+). Its activity is regulated as follows. Activity is dependent of phosphatidylinositol 4,5-bisphosphate and the regulator SRF1. Inhibited by magnesium. Functionally, required for meiosis and spore formation. Seems to be involved in the coordinate induction of late meiotic events. PLD activity is induced under sporulation conditions and seems to be necessary to complete the meiotic cycle, but not for vegetative cell growth. This chain is Phospholipase D1 (SPO14), found in Saccharomyces cerevisiae (strain ATCC 204508 / S288c) (Baker's yeast).